Reading from the N-terminus, the 398-residue chain is Candidapepsin-3 (398 aa).

A signal peptide spans 1–18; it reads MFLKNIFIALAIALLADA. Positions 19–58 are cleaved as a propeptide — activation peptide; it reads TPTTSNNSPGFVALNFDVIKTHKNVTGPQGEINTNVNVKR. N-linked (GlcNAc...) asparagine glycosylation occurs at Asn42. The region spanning 72 to 384 is the Peptidase A1 domain; that stretch reads YASDITVGSN…DLDDNEISLA (313 aa). The active site involves Asp90. 90–92 serves as a coordination point for pepstatin A; the sequence is DTG. The span at 103 to 112 shows a compositional bias: polar residues; that stretch reads VSCQAGQGQD. The segment at 103–139 is disordered; that stretch reads VSCQAGQGQDPNFCKNEGTYSPSSSSSSQNLNSPFSI. A disulfide bridge links Cys105 with Cys116. Residues 123–138 show a composition bias toward low complexity; that stretch reads SPSSSSSSQNLNSPFS. Pepstatin A contacts are provided by residues 140–143 and 274–278; these read EYGD and DSGTT. Asp274 is a catalytic residue. An intrachain disulfide couples Cys312 to Cys350. The N-linked (GlcNAc...) asparagine glycan is linked to Asn313.

The protein belongs to the peptidase A1 family. In terms of processing, O-glycosylated.

The protein localises to the secreted. It carries out the reaction Preferential cleavage at the carboxyl of hydrophobic amino acids, but fails to cleave 15-Leu-|-Tyr-16, 16-Tyr-|-Leu-17 and 24-Phe-|-Phe-25 of insulin B chain. Activates trypsinogen, and degrades keratin.. This is Candidapepsin-3 (SAP3) from Candida albicans (strain WO-1) (Yeast).